The primary structure comprises 70 residues: Putative membrane protein insertion efficiency factor (70 aa).

Belongs to the UPF0161 family.

It localises to the cell membrane. Could be involved in insertion of integral membrane proteins into the membrane. This chain is Putative membrane protein insertion efficiency factor, found in Chloroflexus aurantiacus (strain ATCC 29366 / DSM 635 / J-10-fl).